The chain runs to 63 residues: Sperm protamine P1 (63 aa).

The disordered stretch occupies residues 1-63 (MARYRRHSRS…RYSRRGRRRY (63 aa)).

The protein belongs to the protamine P1 family. Testis.

The protein resides in the nucleus. Its subcellular location is the chromosome. In terms of biological role, protamines substitute for histones in the chromatin of sperm during the haploid phase of spermatogenesis. They compact sperm DNA into a highly condensed, stable and inactive complex. The sequence is that of Sperm protamine P1 (PRM1) from Sminthopsis griseoventer (Gray-bellied dunnart).